Reading from the N-terminus, the 1411-residue chain is Zinc finger protein 609 (1411 aa).

Disordered regions lie at residues 1 to 26, 47 to 190, 353 to 484, 517 to 659, 679 to 963, 1005 to 1125, 1153 to 1221, and 1270 to 1367; these read MSLS…SGDE, QKLE…QPVP, PRFC…EPTV, AHAH…ARPI, ASPG…VIQQ, YEEQ…RQAE, KSED…LTQH, and GSKV…STHH. Phosphoserine occurs at positions 358, 361, and 379. Residues 377–401 are compositionally biased toward polar residues; it reads PNSNTPVNETATASDSKGTSNSSKT. Thr-381 is modified (phosphothreonine). 6 positions are modified to phosphoserine: Ser-413, Ser-433, Ser-446, Ser-452, Ser-467, and Ser-470. Positions 423–437 are enriched in polar residues; sequence ASSTSEDVKASPSSA. Lys-479 participates in a covalent cross-link: Glycyl lysine isopeptide (Lys-Gly) (interchain with G-Cter in SUMO2). The segment at 495-520 adopts a C2H2-type zinc-finger fold; that stretch reads IDCPHPNCNKKYKHINGLKYHQAHAH. Positions 519-529 are enriched in basic and acidic residues; it reads AHTDDDSKPEA. Phosphoserine is present on Ser-533. Polar residues predominate over residues 549 to 563; the sequence is NGASVSQKGSLSPAR. A phosphoserine mark is found at Ser-576 and Ser-578. The segment covering 626 to 649 has biased composition (basic and acidic residues); it reads SLERKCMEKEKCKKPSSLKPEKIP. A compositionally biased stretch (polar residues) spans 679-700; it reads ASPGSSSGLTATVAQAMPNSPQ. Residues 726 to 736 show a composition bias toward basic residues; it reads DKKKKDKKKKE. Ser-743 carries the post-translational modification Phosphoserine. Phosphothreonine is present on Thr-746. Basic and acidic residues predominate over residues 751-764; it reads CRAEEGKSPFRESS. The residue at position 758 (Ser-758) is a Phosphoserine. Lys-789 participates in a covalent cross-link: Glycyl lysine isopeptide (Lys-Gly) (interchain with G-Cter in SUMO2). The segment covering 798-844 has biased composition (polar residues); sequence FTDNAPSPSIGGSSRLENTTPTQPLTPLHVVTQNGAEASSVKTNSPA. Ser-804 is subject to Phosphoserine. Thr-823 is subject to Phosphothreonine. Phosphoserine is present on residues Ser-842, Ser-846, and Ser-849. Positions 855 to 876 are enriched in basic and acidic residues; sequence GEGKVDSVKSKDAEQLVKEGAK. Residues 897 to 908 show a composition bias toward low complexity; sequence SYYSPSYAQSSP. Over residues 926–950 the composition is skewed to basic and acidic residues; sequence TKRDEEPESIEGKVKNDICEEKKPE. A compositionally biased stretch (low complexity) spans 952–963; sequence SSSSQQPSVIQQ. A compositionally biased stretch (basic and acidic residues) spans 1020–1042; that stretch reads GVDKKAEMGLKEREAALKEEWKQ. Ser-1055 is subject to Phosphoserine. Lys-1061 is covalently cross-linked (Glycyl lysine isopeptide (Lys-Gly) (interchain with G-Cter in SUMO2)). 3 stretches are compositionally biased toward basic and acidic residues: residues 1097 to 1113, 1153 to 1187, and 1195 to 1208; these read LKVK…EASE, KSED…KEST, and TSEE…EPRP. Residue Lys-1153 forms a Glycyl lysine isopeptide (Lys-Gly) (interchain with G-Cter in SUMO2) linkage. The segment covering 1286 to 1296 has biased composition (polar residues); sequence PSVTCKSSSES. Lys-1297 is covalently cross-linked (Glycyl lysine isopeptide (Lys-Gly) (interchain with G-Cter in SUMO2)). The span at 1328 to 1337 shows a compositional bias: gly residues; it reads GCGVVGGGGS.

Interacts (via N-terminus) with NIPBL. Interacts with INTS13; promoting association with the integrator complex. Isoform 1: Expressed in myoblasts and myotubes. Isoform 2: Expressed in myoblasts and myotubes, with a preference in undifferentiated myoblasts.

It is found in the nucleus. Its function is as follows. Transcription factor, which activates RAG1, and possibly RAG2, transcription. Through the regulation of RAG1/2 expression, may regulate thymocyte maturation. Along with NIPBL and the multiprotein complex Integrator, promotes cortical neuron migration during brain development by regulating the transcription of crucial genes in this process. Preferentially binds promoters containing paused RNA polymerase II. Up-regulates the expression of SEMA3A, NRP1, PLXND1 and GABBR2 genes, among others. Involved in the regulation of myoblast proliferation during myogenesis. The polypeptide is Zinc finger protein 609 (Homo sapiens (Human)).